The following is a 213-amino-acid chain: Imidazole glycerol phosphate synthase subunit HisH (213 aa).

The 208-residue stretch at 4 to 211 (NLGVIDYGMG…LHWLHQGAEP (208 aa)) folds into the Glutamine amidotransferase type-1 domain. Catalysis depends on Cys-82, which acts as the Nucleophile. Catalysis depends on residues His-186 and Glu-188.

As to quaternary structure, heterodimer of HisH and HisF.

It localises to the cytoplasm. The enzyme catalyses 5-[(5-phospho-1-deoxy-D-ribulos-1-ylimino)methylamino]-1-(5-phospho-beta-D-ribosyl)imidazole-4-carboxamide + L-glutamine = D-erythro-1-(imidazol-4-yl)glycerol 3-phosphate + 5-amino-1-(5-phospho-beta-D-ribosyl)imidazole-4-carboxamide + L-glutamate + H(+). The catalysed reaction is L-glutamine + H2O = L-glutamate + NH4(+). Its pathway is amino-acid biosynthesis; L-histidine biosynthesis; L-histidine from 5-phospho-alpha-D-ribose 1-diphosphate: step 5/9. In terms of biological role, IGPS catalyzes the conversion of PRFAR and glutamine to IGP, AICAR and glutamate. The HisH subunit catalyzes the hydrolysis of glutamine to glutamate and ammonia as part of the synthesis of IGP and AICAR. The resulting ammonia molecule is channeled to the active site of HisF. The protein is Imidazole glycerol phosphate synthase subunit HisH of Synechococcus sp. (strain CC9902).